A 454-amino-acid chain; its full sequence is Bifunctional protein GlmU (454 aa).

The pyrophosphorylase stretch occupies residues 1 to 226 (MALNVVILAA…AIEVEGANNR (226 aa)). Residues 8–11 (LAAG), K22, Q73, 78–79 (GT), 100–102 (YGD), G137, E151, N166, and N224 contribute to the UDP-N-acetyl-alpha-D-glucosamine site. Position 102 (D102) interacts with Mg(2+). Position 224 (N224) interacts with Mg(2+). The tract at residues 227–247 (VQLAQLERAYQAREAEKLMIA) is linker. The N-acetyltransferase stretch occupies residues 248-454 (GANLRDPSRI…GWQRPVKIKK (207 aa)). 2 residues coordinate UDP-N-acetyl-alpha-D-glucosamine: R330 and K348. The active-site Proton acceptor is the H360. 2 residues coordinate UDP-N-acetyl-alpha-D-glucosamine: Y363 and N374. Residues A377, 383–384 (NY), S402, A420, and R437 each bind acetyl-CoA.

This sequence in the N-terminal section; belongs to the N-acetylglucosamine-1-phosphate uridyltransferase family. The protein in the C-terminal section; belongs to the transferase hexapeptide repeat family. As to quaternary structure, homotrimer. Mg(2+) is required as a cofactor.

Its subcellular location is the cytoplasm. It catalyses the reaction alpha-D-glucosamine 1-phosphate + acetyl-CoA = N-acetyl-alpha-D-glucosamine 1-phosphate + CoA + H(+). The catalysed reaction is N-acetyl-alpha-D-glucosamine 1-phosphate + UTP + H(+) = UDP-N-acetyl-alpha-D-glucosamine + diphosphate. It functions in the pathway nucleotide-sugar biosynthesis; UDP-N-acetyl-alpha-D-glucosamine biosynthesis; N-acetyl-alpha-D-glucosamine 1-phosphate from alpha-D-glucosamine 6-phosphate (route II): step 2/2. Its pathway is nucleotide-sugar biosynthesis; UDP-N-acetyl-alpha-D-glucosamine biosynthesis; UDP-N-acetyl-alpha-D-glucosamine from N-acetyl-alpha-D-glucosamine 1-phosphate: step 1/1. It participates in bacterial outer membrane biogenesis; LPS lipid A biosynthesis. Its function is as follows. Catalyzes the last two sequential reactions in the de novo biosynthetic pathway for UDP-N-acetylglucosamine (UDP-GlcNAc). The C-terminal domain catalyzes the transfer of acetyl group from acetyl coenzyme A to glucosamine-1-phosphate (GlcN-1-P) to produce N-acetylglucosamine-1-phosphate (GlcNAc-1-P), which is converted into UDP-GlcNAc by the transfer of uridine 5-monophosphate (from uridine 5-triphosphate), a reaction catalyzed by the N-terminal domain. This Shewanella oneidensis (strain ATCC 700550 / JCM 31522 / CIP 106686 / LMG 19005 / NCIMB 14063 / MR-1) protein is Bifunctional protein GlmU.